The sequence spans 822 residues: Tubulin polyglutamylase TTLL6 (822 aa).

Residues 1 to 24 form a disordered region; it reads MLQCLTSESEEGAEEREESSTEDL. Positions 8–24 are enriched in acidic residues; the sequence is ESEEGAEEREESSTEDL. Residues 57 to 400 form the TTL domain; that stretch reads KKRLVINLSN…GNCDKKKVLE (344 aa). Residues Lys174, 180–181, 202–205, and 215–217 contribute to the ATP site; these read QG, QLYI, and KFD. Residue Gln180 coordinates a protein. Arg241 contacts L-glutamate. 263-264 is an ATP binding site; it reads TN. L-glutamate is bound by residues Tyr265, Ser266, and Lys283. Positions 346, 359, and 361 each coordinate Mg(2+). His362 contributes to the a protein binding site. The interval 371–450 is c-MTBD region; the sequence is KLDKEVKDSL…CGGFRLIYPG (80 aa). An L-glutamate-binding site is contributed by Lys377. Disordered regions lie at residues 736–772 and 791–822; these read PLFPAPKSQYPTLSKERCPHSRSSSRKKEMNSPSVFV and TQARLDPRPSRSHSGTTTRDSSTQDPKHTATA. Residues 802–814 are compositionally biased toward polar residues; the sequence is SHSGTTTRDSSTQ.

Belongs to the tubulin--tyrosine ligase family. In terms of assembly, found in a complex with CEP41. Mg(2+) serves as cofactor. Highly expressed in testis. Expressed in brain, heart, kidney, liver, lung, muscle and trachea. In the brain, specifically expressed in ependymal cilia.

It is found in the cytoplasm. The protein localises to the cytoskeleton. Its subcellular location is the cilium axoneme. It localises to the cilium basal body. The catalysed reaction is L-glutamyl-[protein] + L-glutamate + ATP = gamma-L-glutamyl-L-glutamyl-[protein] + ADP + phosphate + H(+). It catalyses the reaction (L-glutamyl)(n)-gamma-L-glutamyl-L-glutamyl-[protein] + L-glutamate + ATP = (L-glutamyl)(n+1)-gamma-L-glutamyl-L-glutamyl-[protein] + ADP + phosphate + H(+). Its function is as follows. Polyglutamylase which modifies both tubulin and non-tubulin proteins, generating alpha-linked polyglutamate side chains on the gamma-carboxyl group of specific glutamate residues of target proteins. Preferentially mediates ATP-dependent long polyglutamate chain elongation over the initiation step of the polyglutamylation reaction. Preferentially modifies the alpha-tubulin tail over a beta-tail. Promotes tubulin polyglutamylation which stimulates spastin/SPAST-mediated microtubule severing, thereby regulating microtubule functions. Mediates microtubule polyglutamylation in primary cilia axoneme which is important for ciliary structural formation and motility. Mediates microtubule polyglutamylation in motile cilia, necessary for the regulation of ciliary coordinated beating. Polyglutamylates non-tubulin protein nucleotidyltransferase CGAS, leading to CGAS DNA-binding inhibition, thereby preventing antiviral defense response. This chain is Tubulin polyglutamylase TTLL6, found in Mus musculus (Mouse).